The sequence spans 48 residues: Small, acid-soluble spore protein N (48 aa).

Positions 1–48 are disordered; the sequence is MMGREHDKQAQFTPDHLGTKPVAYKRNKGKKMHNKSNEQPDVIQTKGE. The span at 23 to 34 shows a compositional bias: basic residues; sequence AYKRNKGKKMHN.

The protein belongs to the SspN family.

The protein resides in the spore core. This is Small, acid-soluble spore protein N from Bacillus pumilus (strain SAFR-032).